The chain runs to 110 residues: Phosphoribosyl-ATP pyrophosphatase (110 aa).

The protein belongs to the PRA-PH family.

The protein resides in the cytoplasm. It carries out the reaction 1-(5-phospho-beta-D-ribosyl)-ATP + H2O = 1-(5-phospho-beta-D-ribosyl)-5'-AMP + diphosphate + H(+). It participates in amino-acid biosynthesis; L-histidine biosynthesis; L-histidine from 5-phospho-alpha-D-ribose 1-diphosphate: step 2/9. This is Phosphoribosyl-ATP pyrophosphatase (hisE) from Clostridium acetobutylicum (strain ATCC 824 / DSM 792 / JCM 1419 / IAM 19013 / LMG 5710 / NBRC 13948 / NRRL B-527 / VKM B-1787 / 2291 / W).